Consider the following 546-residue polypeptide: Probable ATP-dependent RNA helicase DDX56 (546 aa).

Residues 7 to 35 (LGFEHMGLDHRLLQAVTDLGWSRPTLIQE) carry the Q motif motif. The Helicase ATP-binding domain occupies 38-218 (IPLALEGKDL…ELVLHNPVTL (181 aa)). 51 to 58 (ARTGSGKT) contacts ATP. Ser126 carries the post-translational modification Phosphoserine. Thr141 carries the post-translational modification Phosphothreonine. The DEAD box signature appears at 166–169 (DEAD). The region spanning 230–424 (QLQQFQVVCE…PYQFHMEEIE (195 aa)) is the Helicase C-terminal domain. 2 disordered regions span residues 323 to 342 (PVKG…SDPE) and 504 to 546 (LVHP…AAPS). Positions 505–524 (VHPHKKRKKPLASKKAKKAK) are enriched in basic residues. Ser531 carries the phosphoserine modification.

It belongs to the DEAD box helicase family. DDX56/DBP9 subfamily. As to quaternary structure, may form homooligomeric complexes. Interacts with IRF3. Interacts with OCT4 and POU5F1.

It is found in the nucleus. It localises to the nucleolus. It carries out the reaction ATP + H2O = ADP + phosphate + H(+). Functionally, nucleolar RNA helicase that plays a role in various biological processes including innate immunity, ribosome biogenesis or nucleolus organization. Plays an essential role in maintaining nucleolar integrity in planarian stem cells. Maintains embryonic stem cells proliferation by conventional regulation of ribosome assembly and interaction with OCT4 and POU5F1 complex. Regulates antiviral innate immunity by inhibiting the virus-triggered signaling nuclear translocation of IRF3. Mechanistically, acts by disrupting the interaction between IRF3 and importin IPO5. May play a role in later stages of the processing of the pre-ribosomal particles leading to mature 60S ribosomal subunits. Has intrinsic ATPase activity. In Bos taurus (Bovine), this protein is Probable ATP-dependent RNA helicase DDX56 (DDX56).